The following is a 338-amino-acid chain: RNA 3'-terminal phosphate cyclase (338 aa).

ATP is bound by residues Gln-103 and 283 to 287 (YLADQ). His-308 serves as the catalytic Tele-AMP-histidine intermediate.

This sequence belongs to the RNA 3'-terminal cyclase family. Type 1 subfamily.

It localises to the cytoplasm. It carries out the reaction a 3'-end 3'-phospho-ribonucleotide-RNA + ATP = a 3'-end 2',3'-cyclophospho-ribonucleotide-RNA + AMP + diphosphate. In terms of biological role, catalyzes the conversion of 3'-phosphate to a 2',3'-cyclic phosphodiester at the end of RNA. The mechanism of action of the enzyme occurs in 3 steps: (A) adenylation of the enzyme by ATP; (B) transfer of adenylate to an RNA-N3'P to produce RNA-N3'PP5'A; (C) and attack of the adjacent 2'-hydroxyl on the 3'-phosphorus in the diester linkage to produce the cyclic end product. The biological role of this enzyme is unknown but it is likely to function in some aspects of cellular RNA processing. In Shigella sonnei (strain Ss046), this protein is RNA 3'-terminal phosphate cyclase.